The sequence spans 460 residues: Muscarinic acetylcholine receptor M1 (460 aa).

The Extracellular portion of the chain corresponds to 1 to 22 (MNTSAPPAVSPNITVLAPGKGP). N-linked (GlcNAc...) asparagine glycans are attached at residues asparagine 2 and asparagine 12. The helical transmembrane segment at 23–48 (WQVAFIGITTGLLSLATVTGNLLVLI) threads the bilayer. At 49–62 (SFKVNTELKTVNNY) the chain is on the cytoplasmic side. A helical membrane pass occupies residues 63–84 (FLLSLACADLIIGTFSMNLYTT). Topologically, residues 85-95 (YLLMGHWALGT) are extracellular. The chain crosses the membrane as a helical span at residues 96 to 121 (LACDLWLALDYVASNASVMNLLLISF). An intrachain disulfide couples cysteine 98 to cysteine 178. Over 122–142 (DRYFSVTRPLSYRAKRTPRRA) the chain is Cytoplasmic. Residues 143-164 (ALMIGLAWLVSFVLWAPAILFW) form a helical membrane-spanning segment. The Extracellular portion of the chain corresponds to 165 to 185 (QYLVGERTVLAGQCYIQFLSQ). A helical transmembrane segment spans residues 186 to 209 (PIITFGTAMAAFYLPVTVMCTLYW). At 210–366 (RIYRETENRA…LVKEKKAART (157 aa)) the chain is on the cytoplasmic side. Disordered regions lie at residues 225-259 (LQGS…PGRC), 273-297 (SWKE…EEPG), and 310-351 (EAQA…QLAK). Threonine 230 is modified (phosphothreonine). The segment covering 238–247 (SSSSERSQPG) has biased composition (low complexity). Basic residues predominate over residues 328 to 343 (RPTKKGRDRAGKGQKP). The helical transmembrane segment at 367–390 (LSAILLAFILTWTPYNIMVLVSTF) threads the bilayer. Residues 391 to 401 (CKDCVPETLWE) lie on the Extracellular side of the membrane. Residues 402–420 (LGYWLCYVNSTINPMCYAL) form a helical membrane-spanning segment. Over 421–460 (CNKAFRDTFRLLLLCRWDKRRWRKIPKRPGSVHRTPSRQC) the chain is Cytoplasmic. At threonine 428 the chain carries Phosphothreonine. Phosphoserine is present on serine 451. The residue at position 455 (threonine 455) is a Phosphothreonine. Residue serine 457 is modified to Phosphoserine.

Belongs to the G-protein coupled receptor 1 family. Muscarinic acetylcholine receptor subfamily. CHRM1 sub-subfamily. As to quaternary structure, interacts with GPRASP2. Interacts with TMEM147.

The protein resides in the cell membrane. It is found in the postsynaptic cell membrane. The muscarinic acetylcholine receptor mediates various cellular responses, including inhibition of adenylate cyclase, breakdown of phosphoinositides and modulation of potassium channels through the action of G proteins. Primary transducing effect is Pi turnover. This is Muscarinic acetylcholine receptor M1 (CHRM1) from Macaca mulatta (Rhesus macaque).